The primary structure comprises 450 residues: UDP-N-acetylmuramoylalanine--D-glutamate ligase (450 aa).

119 to 125 (GSNGKTT) contacts ATP.

The protein belongs to the MurCDEF family.

It is found in the cytoplasm. It carries out the reaction UDP-N-acetyl-alpha-D-muramoyl-L-alanine + D-glutamate + ATP = UDP-N-acetyl-alpha-D-muramoyl-L-alanyl-D-glutamate + ADP + phosphate + H(+). It participates in cell wall biogenesis; peptidoglycan biosynthesis. Functionally, cell wall formation. Catalyzes the addition of glutamate to the nucleotide precursor UDP-N-acetylmuramoyl-L-alanine (UMA). The protein is UDP-N-acetylmuramoylalanine--D-glutamate ligase of Bacillus anthracis (strain A0248).